The chain runs to 28 residues: Conotoxin Cl1.2 (28 aa).

Contains 2 disulfide bonds. As to expression, expressed by the venom duct.

The protein resides in the secreted. The polypeptide is Conotoxin Cl1.2 (Californiconus californicus (California cone)).